Here is a 136-residue protein sequence, read N- to C-terminus: Histone H3.2 (136 aa).

Positions 1–43 are disordered; it reads MARTKQTARKSTGGKAPRKQLATKAARKSAPATGGVKKPHRFR. K5 carries the post-translational modification N6-methylated lysine. K10 is modified (N6-acetyllysine; alternate). Residue K10 is modified to N6-methylated lysine; alternate. S11 bears the Phosphoserine mark. T12 carries the phosphothreonine modification. K15 is modified (N6-acetyllysine). N6-acetyllysine; alternate occurs at positions 19 and 24. N6-methylated lysine; alternate is present on residues K19 and K24. At K28 the chain carries N6-methylated lysine. S29 carries the post-translational modification Phosphoserine. Residue K37 is modified to N6-methylated lysine.

It belongs to the histone H3 family. As to quaternary structure, the nucleosome is a histone octamer containing two molecules each of H2A, H2B, H3 and H4 assembled in one H3-H4 heterotetramer and two H2A-H2B heterodimers. The octamer wraps approximately 147 bp of DNA. In terms of processing, acetylation is generally linked to gene activation. Can be acetylated to form H3K9ac, H3K14ac, H3K18ac and H3K23ac. H3K9ac could compete with H3K9me and prevent gene silencing. H3K9ac is restricted to euchromatin. Methylated to form mainly H3K4me, H3K9me, H3K18me, H3K23me, H3K27me and H3K36me. H3K4me1/2/3, H3K9me3, H3K27me3 and H3K36me1/2/3 are typical marks for euchromatin, whereas heterochromatic chromocenters are enriched in H3K9me1/2 and H3K27me1/2. H2BK143ub1 is probably prerequisite for H3K4me. Post-translationally, can be phosphorylated to form H3S10ph, H3T11ph and H3S28ph.

The protein resides in the nucleus. It localises to the chromosome. Core component of nucleosome. Nucleosomes wrap and compact DNA into chromatin, limiting DNA accessibility to the cellular machineries which require DNA as a template. Histones thereby play a central role in transcription regulation, DNA repair, DNA replication and chromosomal stability. DNA accessibility is regulated via a complex set of post-translational modifications of histones, also called histone code, and nucleosome remodeling. This is Histone H3.2 from Encephalartos altensteinii (Altenstein's bread tree).